The sequence spans 207 residues: LexA repressor (207 aa).

Residues 28–48 constitute a DNA-binding region (H-T-H motif); it reads RAEIAQKLGFKSANAAEEHLK. Catalysis depends on for autocatalytic cleavage activity residues serine 124 and lysine 161.

This sequence belongs to the peptidase S24 family. Homodimer.

The catalysed reaction is Hydrolysis of Ala-|-Gly bond in repressor LexA.. Functionally, represses a number of genes involved in the response to DNA damage (SOS response), including recA and lexA. In the presence of single-stranded DNA, RecA interacts with LexA causing an autocatalytic cleavage which disrupts the DNA-binding part of LexA, leading to derepression of the SOS regulon and eventually DNA repair. In Aeromonas hydrophila subsp. hydrophila (strain ATCC 7966 / DSM 30187 / BCRC 13018 / CCUG 14551 / JCM 1027 / KCTC 2358 / NCIMB 9240 / NCTC 8049), this protein is LexA repressor.